The primary structure comprises 61 residues: UPF0434 protein Pfl01_4174 (61 aa).

This sequence belongs to the UPF0434 family.

The chain is UPF0434 protein Pfl01_4174 from Pseudomonas fluorescens (strain Pf0-1).